We begin with the raw amino-acid sequence, 339 residues long: UPF0324 membrane protein CPE0129 (339 aa).

8 consecutive transmembrane segments (helical) span residues 12–30 (ILPGLFICLIIGIIAEFLG), 35–54 (TIGAATFAIFMGIFLGNTLF), 90–112 (LGFNGVFYIAILMTLTICTTYFI), 122–144 (YSLLMSAGNAVCGSSAIGSVSPV), 156–178 (ITIVNVTGTILMILLPLITSILY), 210–232 (VVELATVFKIIRIIFLVVVVLVF), 259–281 (WFIIGFFIICILNSIGIIPGILG), and 316–338 (MLYGGLVGVCQIIFALSLINIFI).

Belongs to the UPF0324 family.

It localises to the cell membrane. The polypeptide is UPF0324 membrane protein CPE0129 (Clostridium perfringens (strain 13 / Type A)).